Reading from the N-terminus, the 429-residue chain is UPF0761 membrane protein ABO_1543 (429 aa).

6 helical membrane-spanning segments follow: residues Leu-45–Leu-65, Leu-102–Glu-122, Leu-141–Ile-161, Trp-184–Val-204, Leu-216–Ile-236, and Leu-256–Val-278.

The protein belongs to the UPF0761 family.

It is found in the cell inner membrane. The protein is UPF0761 membrane protein ABO_1543 of Alcanivorax borkumensis (strain ATCC 700651 / DSM 11573 / NCIMB 13689 / SK2).